We begin with the raw amino-acid sequence, 284 residues long: Avenin-like b9 (284 aa).

An N-terminal signal peptide occupies residues 1–18 (MKVFILALLALAATTAIA).

It belongs to the prolamin family. Contains disulfide bonds.

Seed storage protein. Might be integrated via inter-chain disulfide bonds within the glutenin polymer. This is Avenin-like b9 from Triticum aestivum (Wheat).